Reading from the N-terminus, the 1509-residue chain is MSLSNRKEITGLTRMTPKGLKELCKKDKLYQTPRLNDTLYLHYQGFQCIEHLEEYTELKCLWLECNAISEIQGLEKLSKLKCLFLQNNLITKIENLEPCRELDTLNLSSNHIRKIQNIGTNILPVLNTLTIASNYLKDSESLSDLVQCKTLSVLDLSNNRIDDILIVKIFEQMLNLKVLVLQGNPVVSRLPQYRKTLILACKELTYLDSRPVFPRDRACAEAWKRDGYEGERKENNRWNRAERRKTRESINCTIRIRNSHRPPDQQDPLLRSSDSEDDTCTGTTLKKVALENGCVDDIWKEVSCEHPTSESGASTSSSVEDNDATSSQDDLIAEKLSNRGTLEGRPKVLNETEGSNLKRVNQNIKNVEPRNIQTIVFEEDVSKKSQVIIEEENVPKINLINEPCDLNDKKSIIVKCKKTGYTSIGPVHKKTVFHEDAEIKKMEDVVLCQDFIKSEEHMSSDFAVNSKLGKDIEQTCTAQRNEAQCKEFDEDQKIIEIESKLIHEMYESFEADDDDKLNETFDLNLYETTSEHHAHKVSFDENKMPMSCYQEDKESILLPKSMEETLFEEECFIANDKCAHDLEEIGRQMDEDLAELRQSTQNVVGLSKDEIAETDIETDEEDLLAQQDPYSPLLKQQFKNRRMKIMLIEESKAQGESQRDLNITVSNESGGDDKQDQLFARILDDATENIPKRIFGTGCDALSYNWPQEECLLQLTLSEVKETPAQESTFKNSITNSSSFEEANKICVHMDQKMAEEEEALGKLLHDLENEAEHVYEINTKMTYEETTSSKEVVSICTSLLDDIIVELTLNEILCHEKPKSFKFGPIESDEEFSYSLEPQLEKLVPPALEDPARGKSLRECLDTFSDFVSSMADPKLPLMLGRNPTLGVEKIRAAQELLKSKNLAEIYADSAESLNSQVAKEIEKRKRRVAATATRCFNQRDKYDDTLELVNNRLMIVKRDSGDLEELPPPPPLISDSESEDYDTADDEYTPGKGSHKLGSKPKDSKNLVTNSFLKEKQADSDVVEEVVKKNDHAEDEFYSLEAMTTFSSLDAEFFQKLDLQKVNDSEDSEPAINCMRNYNELQAYMKSGSLNHRMNTEETKTLQTSFSTVGSDEGKTKLRNPQEEKENALLKKMVLRMKEYEEREHQLQLVPHELGSVKLSLGGSKLFEQTPETVLVHTENEPTSKIKFIDNKKTNNDESTHLIKNYCEPLVRASCKTSNKSIDDDIQSDVSTDYESGEEVVVVEPPKLSEAVLKSFYSDGFEADLNMVHELEEATRRNLYCYHSNEMLNPTKNHPFSLKKTLSSKTSTNEVTVGAKAKWAKIAERLHEFLDPETISKLNKEQFGESDEFEDSQDANIFTDITFEENNSKKYENLVSEECNCTKSIYDENSCPSELNGNDQFSGLKEINKDKEMPTSNLELNSVMIQSKKKTSEILPNEIGNIIKACSSFEAPPTDPIGIEHFEDPTLTQMNPEFLKTKQIECNLQILSEDGDVVVQELSVNAQVSFE.

LRR repeat units lie at residues 34–56 (RLND…EEYT), 57–78 (ELKC…EKLS), 79–100 (KLKC…EPCR), 101–122 (ELDT…GTNI), 125–146 (VLNT…SDLV), and 150–171 (TLSV…KIFE). In terms of domain architecture, LRRCT spans 185–223 (PVVSRLPQYRKTLILACKELTYLDSRPVFPRDRACAEAW). Disordered regions lie at residues 252 to 280 (CTIR…DDTC), 306 to 327 (HPTS…ATSS), 962 to 1008 (SGDL…DSKN), and 1103 to 1122 (TLQT…KLRN). Positions 309-318 (SESGASTSSS) are enriched in low complexity. The span at 978 to 990 (SESEDYDTADDEY) shows a compositional bias: acidic residues. A compositionally biased stretch (polar residues) spans 1103–1112 (TLQTSFSTVG).

The protein belongs to the DNAAF1 family.

The protein resides in the cell projection. The protein localises to the cilium. Its function is as follows. Cilium-specific protein required for cilia structures. The polypeptide is Dynein axonemal assembly factor 1 homolog (dtr) (Drosophila yakuba (Fruit fly)).